The sequence spans 82 residues: Large ribosomal subunit protein uL23 (82 aa).

It belongs to the universal ribosomal protein uL23 family. Part of the 50S ribosomal subunit. Contacts protein L29.

In terms of biological role, binds to 23S rRNA. One of the proteins that surrounds the polypeptide exit tunnel on the outside of the ribosome. The chain is Large ribosomal subunit protein uL23 from Picrophilus torridus (strain ATCC 700027 / DSM 9790 / JCM 10055 / NBRC 100828 / KAW 2/3).